A 399-amino-acid polypeptide reads, in one-letter code: Endonuclease III homolog 1 (399 aa).

The N-terminal 26 residues, 1–26 (MQKISKYSSMAILRKRPLVKTETGPE), are a transit peptide targeting the mitochondrion. A Bipartite nuclear localization signal motif is present at residues 14–37 (RKRPLVKTETGPESELLPEKRTKI). Lys194 participates in a covalent cross-link: Glycyl lysine isopeptide (Lys-Gly) (interchain with G-Cter in SUMO). A HhH domain is found at 223-247 (FSSDVPATINELLGLPGVGPKMAYL). The Nucleophile; for N-glycosylase activity role is filled by Lys243.

It belongs to the Nth/MutY family. Post-translationally, monosumoylated. Sumoylation is associated with targeting of NTG1 to nuclei containing oxidative DNA damage.

It localises to the nucleus. The protein resides in the mitochondrion. The catalysed reaction is 2'-deoxyribonucleotide-(2'-deoxyribose 5'-phosphate)-2'-deoxyribonucleotide-DNA = a 3'-end 2'-deoxyribonucleotide-(2,3-dehydro-2,3-deoxyribose 5'-phosphate)-DNA + a 5'-end 5'-phospho-2'-deoxyribonucleoside-DNA + H(+). In terms of biological role, bifunctional DNA N-glycosylase with associated apurinic/apyrimidinic (AP) lyase function that catalyzes the first step in base excision repair (BER), the primary repair pathway for the repair of oxidative DNA damage. The DNA N-glycosylase activity releases the damaged DNA base from DNA by cleaving the N-glycosidic bond, leaving an AP site. The AP-lyase activity cleaves the phosphodiester bond 3' to the AP site by a beta-elimination. Primarily recognizes and repairs oxidative base damage of pyrimidines, but also purine-derived lesions, alkylation damage and cytosine photoproducts generated by UV irradiation as well as abasic sites. Also has 8-oxoguanine DNA glycosylase activity. The AP lyase can incise AP sites opposite all four bases. May also play a role in the regulation of mtDNA copy number by introducing a double-stranded break (DSB) at the mtDNA replication origin ori5, initiating the rolling-circle mtDNA replication. This is Endonuclease III homolog 1 from Saccharomyces cerevisiae (strain ATCC 204508 / S288c) (Baker's yeast).